The primary structure comprises 334 residues: Malate dehydrogenase, cytoplasmic (334 aa).

11 to 17 (GAAGQIA) contributes to the NAD(+) binding site. Residues Arg-92 and Arg-98 each contribute to the substrate site. NAD(+) is bound by residues Asn-105, Gln-112, and 129–131 (VGN). Substrate-binding residues include Asn-131 and Arg-162. His-187 serves as the catalytic Proton acceptor.

The protein belongs to the LDH/MDH superfamily. MDH type 2 family. As to quaternary structure, homodimer.

It is found in the cytoplasm. Its subcellular location is the cytosol. The catalysed reaction is (S)-malate + NAD(+) = oxaloacetate + NADH + H(+). It catalyses the reaction (S)-2-hydroxyglutarate + NAD(+) = 2-oxoglutarate + NADH + H(+). Catalyzes the reduction of aromatic alpha-keto acids in the presence of NADH. Plays essential roles in the malate-aspartate shuttle and the tricarboxylic acid cycle, important in mitochondrial NADH supply for oxidative phosphorylation. Catalyzes the reduction of 2-oxoglutarate to 2-hydroxyglutarate, leading to elevated reactive oxygen species (ROS). The protein is Malate dehydrogenase, cytoplasmic (mdh1) of Xenopus laevis (African clawed frog).